The chain runs to 590 residues: Nuclear receptor subfamily 2 group C member 1 (590 aa).

The segment at 1-166 (MATIEEIAHQ…RLQRCIAFGM (166 aa)) is required for interaction with KAT2B. The nuclear receptor DNA-binding region spans 98–173 (FDLCVVCGDK…FGMKQDSVQC (76 aa)). 2 NR C4-type zinc fingers span residues 101–121 (CVVCGDKASGRHYGAITCEGC) and 137–156 (CRGSKDCIINKHHRNRCQYC). Phosphoserine is present on residues Ser185 and Ser203. The residue at position 208 (Thr208) is a Phosphothreonine. Thr210 bears the Phosphothreonine; by MAPK1 mark. Lys238 is covalently cross-linked (Glycyl lysine isopeptide (Lys-Gly) (interchain with G-Cter in SUMO); alternate). A Glycyl lysine isopeptide (Lys-Gly) (interchain with G-Cter in SUMO2); alternate cross-link involves residue Lys238. The region spanning 333 to 577 (ESMEGSTHLI…SVIPHILKME (245 aa)) is the NR LBD domain. Ser568 is subject to Phosphoserine; by PKC. The tract at residues 571-590 (PHILKMEPADYNSQIIGHSL) is required for interaction with NRIP1. Residue Lys575 forms a Glycyl lysine isopeptide (Lys-Gly) (interchain with G-Cter in SUMO2) linkage.

This sequence belongs to the nuclear hormone receptor family. NR2 subfamily. As to quaternary structure, homodimer. Heterodimer; with NR2C2 which is required for chromatin remodeling and for binding to promoter regions such as globin DR1 repeats. Interacts with ESR1; the interaction prevents homodimerization of ESR1 and suppresses its transcriptional activity and cell growth. Interacts with NRIP1 (via its LXXLL motifs); the interaction provides corepressor activity. Interacts with HDAC3 (via the DNA-binding domain); the interaction recruits phosphorylated NR2C1 to PML bodies for sumoylation. Interacts with HDAC4 (via the DNA-binding domain). Interacts with PIAS1; the interaction is required for sumoylation of NR2C1. Interacts with UBE2I; the interaction is required for sumoylation of NR2C1. Interacts with KAT2B; the interaction acts as a corepressor of gene expression. Post-translationally, sumoylation requires both PIAS1 and UBE2I. Sumoylation appears to dissociate NR2C1 from the PML nuclear bodies. Enhances the interaction with NRIP1 but inhibits interaction with KAT2B. In proliferating cells, stimulation by all-trans retinoic acid, activation of MAPK1-mediated phosphorylation and recruitment to PML bodies with subsequent sumoylation, suppresses OCT4 expression. In terms of processing, phosphorylated on several serine and threonine residues. Phosphorylation on Thr-210, stimulated by all-trans retinoic acid (atRA) mediates PML location and sumoylation in proliferating cells which then modulates its association with effector molecules, KAT2B and NRIP1. Phosphorylation on Ser-568 by PKC is important for protein stability and function as activator of RARB.

It localises to the nucleus. It is found in the PML body. Orphan nuclear receptor. Binds the IR7 element in the promoter of its own gene in an autoregulatory negative feedback mechanism. Primarily repressor of a broad range of genes including ESR1 and RARB. Together with NR2C2, forms the core of the DRED (direct repeat erythroid-definitive) complex that represses embryonic and fetal globin transcription. Binds to hormone response elements (HREs) consisting of two 5'-AGGTCA-3' half site direct repeat consensus sequences. Also activator of OCT4 gene expression. Plays a fundamental role in early embryogenesis and regulates embryonic stem cell proliferation and differentiation. Mediator of retinoic acid-regulated preadipocyte proliferation. The protein is Nuclear receptor subfamily 2 group C member 1 (Nr2c1) of Rattus norvegicus (Rat).